We begin with the raw amino-acid sequence, 117 residues long: UPF0342 protein lwe2240 (117 aa).

The protein belongs to the UPF0342 family.

The protein is UPF0342 protein lwe2240 of Listeria welshimeri serovar 6b (strain ATCC 35897 / DSM 20650 / CCUG 15529 / CIP 8149 / NCTC 11857 / SLCC 5334 / V8).